Consider the following 208-residue polypeptide: 3-isopropylmalate dehydratase small subunit 2 (208 aa).

Residues 163–208 are disordered; it reads EGERLDNASTSAGHGHAGTPLGDDPAKEDGPRPEQASGHQKEEHHA.

Belongs to the LeuD family. LeuD type 2 subfamily. As to quaternary structure, heterodimer of LeuC and LeuD.

It carries out the reaction (2R,3S)-3-isopropylmalate = (2S)-2-isopropylmalate. Its pathway is amino-acid biosynthesis; L-leucine biosynthesis; L-leucine from 3-methyl-2-oxobutanoate: step 2/4. Its function is as follows. Catalyzes the isomerization between 2-isopropylmalate and 3-isopropylmalate, via the formation of 2-isopropylmaleate. This chain is 3-isopropylmalate dehydratase small subunit 2 (leuD2), found in Deinococcus radiodurans (strain ATCC 13939 / DSM 20539 / JCM 16871 / CCUG 27074 / LMG 4051 / NBRC 15346 / NCIMB 9279 / VKM B-1422 / R1).